Reading from the N-terminus, the 243-residue chain is Small ribosomal subunit protein uS5 (243 aa).

Basic and acidic residues-rich tracts occupy residues 1-21 and 34-46; these read MPID…EGQK and LEEK…DHKG. Residues 1–85 are disordered; that stretch reads MPIDKKQEKN…NFKKNANKKP (85 aa). Residues 89 to 152 enclose the S5 DRBM domain; the sequence is FEEKIVNIAR…KDAQNNLIRV (64 aa).

The protein belongs to the universal ribosomal protein uS5 family. In terms of assembly, part of the 30S ribosomal subunit. Contacts proteins S4 and S8.

Its function is as follows. With S4 and S12 plays an important role in translational accuracy. Located at the back of the 30S subunit body where it stabilizes the conformation of the head with respect to the body. In Mycoplasma mobile (strain ATCC 43663 / 163K / NCTC 11711) (Mesomycoplasma mobile), this protein is Small ribosomal subunit protein uS5.